The following is a 77-amino-acid chain: MSTSTTIRVSTQTRDRLAAQARERGISMSALLTELAAQAERQAIFRAEREASHAETTTQAVRDEDREWEGTVGDGLG.

Residues 49–77 are disordered; it reads REASHAETTTQAVRDEDREWEGTVGDGLG.

In terms of assembly, forms a complex with cognate toxin MazF7.

In terms of biological role, antitoxin component of a type II toxin-antitoxin (TA) system. The protein is Putative antitoxin MazE7 (mazE7) of Mycobacterium tuberculosis (strain CDC 1551 / Oshkosh).